A 404-amino-acid chain; its full sequence is Argininosuccinate synthase (404 aa).

ATP-binding positions include 12–20 and A39; that span reads AYSGGLDTS. Positions 91 and 96 each coordinate L-citrulline. G121 serves as a coordination point for ATP. T123, N127, and D128 together coordinate L-aspartate. N127 provides a ligand contact to L-citrulline. 5 residues coordinate L-citrulline: R131, S180, S189, E265, and Y277.

Belongs to the argininosuccinate synthase family. Type 1 subfamily. Homotetramer.

It is found in the cytoplasm. It carries out the reaction L-citrulline + L-aspartate + ATP = 2-(N(omega)-L-arginino)succinate + AMP + diphosphate + H(+). Its pathway is amino-acid biosynthesis; L-arginine biosynthesis; L-arginine from L-ornithine and carbamoyl phosphate: step 2/3. This Vibrio parahaemolyticus serotype O3:K6 (strain RIMD 2210633) protein is Argininosuccinate synthase.